Reading from the N-terminus, the 101-residue chain is MRPYELMVIIDPEVEERTVESSLQKFLNVITTDGGTIEKVDIWGRRRLAYDIKKKSEGIYAVVNFTAAPATAKELDRQLSLNETIMRTKIIRPEDQKVVAE.

It belongs to the bacterial ribosomal protein bS6 family.

Binds together with bS18 to 16S ribosomal RNA. The polypeptide is Small ribosomal subunit protein bS6 (Paenarthrobacter aurescens (strain TC1)).